Reading from the N-terminus, the 357-residue chain is S-adenosyl-L-methionine:benzoic acid/salicylic acid carboxyl methyltransferase 3 (357 aa).

Residue tyrosine 18 participates in S-adenosyl-L-homocysteine binding. Benzoate is bound at residue glutamine 25. Positions 59, 64, 96, 97, 135, and 136 each coordinate S-adenosyl-L-homocysteine. Residue tryptophan 157 coordinates benzoate. Mg(2+) is bound by residues asparagine 168, aspartate 254, phenylalanine 256, and asparagine 257. Glutamine 260 is a benzoate binding site.

Belongs to the methyltransferase superfamily. Type-7 methyltransferase family.

It carries out the reaction benzoate + S-adenosyl-L-methionine = methyl benzoate + S-adenosyl-L-homocysteine. Its pathway is aromatic compound metabolism. In terms of biological role, converts benzoic acid into the volatile ester methyl benzoates. This scent, mostly produced in a rhythmical, diurnal manner, attracts the pollinators. The sequence is that of S-adenosyl-L-methionine:benzoic acid/salicylic acid carboxyl methyltransferase 3 from Petunia hybrida (Petunia).